We begin with the raw amino-acid sequence, 273 residues long: Dermonecrotic toxin LdSicTox-alphaIB3av (273 aa).

Residue His-5 is part of the active site. Mg(2+) is bound by residues Glu-25 and Asp-27. His-41 functions as the Nucleophile in the catalytic mechanism. 2 disulfide bridges follow: Cys-45–Cys-51 and Cys-47–Cys-190. Mg(2+) is bound at residue Asp-85.

The protein belongs to the arthropod phospholipase D family. Class II subfamily. Mg(2+) serves as cofactor. In terms of tissue distribution, expressed by the venom gland.

Its subcellular location is the secreted. The catalysed reaction is an N-(acyl)-sphingosylphosphocholine = an N-(acyl)-sphingosyl-1,3-cyclic phosphate + choline. It carries out the reaction an N-(acyl)-sphingosylphosphoethanolamine = an N-(acyl)-sphingosyl-1,3-cyclic phosphate + ethanolamine. The enzyme catalyses a 1-acyl-sn-glycero-3-phosphocholine = a 1-acyl-sn-glycero-2,3-cyclic phosphate + choline. It catalyses the reaction a 1-acyl-sn-glycero-3-phosphoethanolamine = a 1-acyl-sn-glycero-2,3-cyclic phosphate + ethanolamine. Its function is as follows. Dermonecrotic toxins cleave the phosphodiester linkage between the phosphate and headgroup of certain phospholipids (sphingolipid and lysolipid substrates), forming an alcohol (often choline) and a cyclic phosphate. This toxin acts on sphingomyelin (SM). It may also act on ceramide phosphoethanolamine (CPE), lysophosphatidylcholine (LPC) and lysophosphatidylethanolamine (LPE), but not on lysophosphatidylserine (LPS), and lysophosphatidylglycerol (LPG). It acts by transphosphatidylation, releasing exclusively cyclic phosphate products as second products. Induces dermonecrosis, hemolysis, increased vascular permeability, edema, inflammatory response, and platelet aggregation. In Loxosceles deserta (Desert recluse spider), this protein is Dermonecrotic toxin LdSicTox-alphaIB3av.